Reading from the N-terminus, the 203-residue chain is Small ribosomal subunit protein uS4c (203 aa).

An S4 RNA-binding domain is found at 91-154; it reads MRLDNIIFRL…KYESIISKNI (64 aa).

It belongs to the universal ribosomal protein uS4 family. Part of the 30S ribosomal subunit. Contacts protein S5. The interaction surface between S4 and S5 is involved in control of translational fidelity.

It localises to the plastid. It is found in the chloroplast. Functionally, one of the primary rRNA binding proteins, it binds directly to 16S rRNA where it nucleates assembly of the body of the 30S subunit. With S5 and S12 plays an important role in translational accuracy. The chain is Small ribosomal subunit protein uS4c (rps4) from Lopidium struthiopteris (Moss).